We begin with the raw amino-acid sequence, 834 residues long: Protein kintoun (834 aa).

Disordered stretches follow at residues 214-239, 374-415, 547-669, and 759-834; these read TAEE…KQEP, SRED…SVAP, KGKV…STGR, and KKNQ…EMDD. The residue at position 378 (Ser-378) is a Phosphoserine. A compositionally biased stretch (acidic residues) spans 389-398; it reads PVEEDPDGEL. Residues 552–571 are compositionally biased toward basic and acidic residues; it reads AKKDNAPLDVKFERNQEGHA. The span at 582–596 shows a compositional bias: acidic residues; sequence EEEEDKENQDQEPES. A compositionally biased stretch (low complexity) spans 597-607; sequence DQQQQQQVQNK. Composition is skewed to basic residues over residues 608–619 and 759–773; these read KPGKKQRKKNKK and KKNQ…RAQQ. Ser-777 is modified (phosphoserine). Residues 785–798 show a composition bias toward basic and acidic residues; sequence EETRGSALKQEENP.

This sequence belongs to the PIH1 family. Kintoun subfamily. In terms of assembly, interacts with Pp1alpha-96A, Pp1-87B, Pp1-13C and flw.

The protein localises to the cytoplasm. Required for cytoplasmic pre-assembly of axonemal dyneins, thereby playing a central role in motility in cilia and flagella. Involved in pre-assembly of dynein arm complexes in the cytoplasm before intraflagellar transport loads them for the ciliary compartment. This chain is Protein kintoun, found in Drosophila melanogaster (Fruit fly).